The primary structure comprises 174 residues: Peptide deformylase (174 aa).

Residues cysteine 96 and histidine 138 each coordinate Fe cation. The active site involves glutamate 139. Histidine 142 provides a ligand contact to Fe cation.

It belongs to the polypeptide deformylase family. It depends on Fe(2+) as a cofactor.

It carries out the reaction N-terminal N-formyl-L-methionyl-[peptide] + H2O = N-terminal L-methionyl-[peptide] + formate. Removes the formyl group from the N-terminal Met of newly synthesized proteins. Requires at least a dipeptide for an efficient rate of reaction. N-terminal L-methionine is a prerequisite for activity but the enzyme has broad specificity at other positions. This is Peptide deformylase from Nautilia profundicola (strain ATCC BAA-1463 / DSM 18972 / AmH).